Reading from the N-terminus, the 339-residue chain is Ketol-acid reductoisomerase (NADP(+)) (339 aa).

Residues 1-182 enclose the KARI N-terminal Rossmann domain; sequence MRVYYDRDAD…GGGRSGIIET (182 aa). Residues 24-27, Lys-48, Ser-51, Thr-53, and 83-86 contribute to the NADP(+) site; these read YGSQ and DELQ. The active site involves His-108. Residue Gly-134 participates in NADP(+) binding. In terms of domain architecture, KARI C-terminal knotted spans 183–328; that stretch reads NFREECETDL…AKLRGMMPWI (146 aa). Residues Asp-191, Glu-195, Glu-227, and Glu-231 each coordinate Mg(2+). Ser-252 serves as a coordination point for substrate.

The protein belongs to the ketol-acid reductoisomerase family. Requires Mg(2+) as cofactor.

The enzyme catalyses (2R)-2,3-dihydroxy-3-methylbutanoate + NADP(+) = (2S)-2-acetolactate + NADPH + H(+). It carries out the reaction (2R,3R)-2,3-dihydroxy-3-methylpentanoate + NADP(+) = (S)-2-ethyl-2-hydroxy-3-oxobutanoate + NADPH + H(+). It participates in amino-acid biosynthesis; L-isoleucine biosynthesis; L-isoleucine from 2-oxobutanoate: step 2/4. It functions in the pathway amino-acid biosynthesis; L-valine biosynthesis; L-valine from pyruvate: step 2/4. Its function is as follows. Involved in the biosynthesis of branched-chain amino acids (BCAA). Catalyzes an alkyl-migration followed by a ketol-acid reduction of (S)-2-acetolactate (S2AL) to yield (R)-2,3-dihydroxy-isovalerate. In the isomerase reaction, S2AL is rearranged via a Mg-dependent methyl migration to produce 3-hydroxy-3-methyl-2-ketobutyrate (HMKB). In the reductase reaction, this 2-ketoacid undergoes a metal-dependent reduction by NADPH to yield (R)-2,3-dihydroxy-isovalerate. The chain is Ketol-acid reductoisomerase (NADP(+)) from Rhizobium johnstonii (strain DSM 114642 / LMG 32736 / 3841) (Rhizobium leguminosarum bv. viciae).